The primary structure comprises 198 residues: Protein hunchback (198 aa).

2 disordered regions span residues 16 to 116 and 158 to 198; these read SHHH…NPMQ and LTPP…KYMA. The segment covering 17-31 has biased composition (basic residues); sequence HHHHHHHAHHSHHQH. 2 stretches are compositionally biased toward low complexity: residues 35–46 and 68–83; these read SNSNSNASSPHQ and QQQQ…QQQQ. Positions 95-105 are enriched in polar residues; sequence PSPSNNDQNSP. A compositionally biased stretch (basic and acidic residues) spans 179–198; that stretch reads EPEKEHDLMSNSSEDMKYMA.

Belongs to the hunchback C2H2-type zinc-finger protein family.

It localises to the nucleus. Gap class segmentation protein that controls development of head structures. In Drosophila cyrtoloma (Fruit fly), this protein is Protein hunchback (hb).